Reading from the N-terminus, the 294-residue chain is 33 kDa chaperonin (294 aa).

Cystine bridges form between C239-C241 and C272-C275.

The protein belongs to the HSP33 family. Post-translationally, under oxidizing conditions two disulfide bonds are formed involving the reactive cysteines. Under reducing conditions zinc is bound to the reactive cysteines and the protein is inactive.

It localises to the cytoplasm. Functionally, redox regulated molecular chaperone. Protects both thermally unfolding and oxidatively damaged proteins from irreversible aggregation. Plays an important role in the bacterial defense system toward oxidative stress. This chain is 33 kDa chaperonin, found in Listeria monocytogenes serovar 1/2a (strain ATCC BAA-679 / EGD-e).